Consider the following 367-residue polypeptide: Selenoprotein Pa (367 aa).

A signal peptide spans 1–19 (MWKALSLTLALCLLVGCSA). A non-standard amino acid (selenocysteine) is located at residue Sec59. An N-linked (GlcNAc...) asparagine glycan is attached at Asn109. Over residues 191–220 (EVNKPVEEEPRQDHGHHEHGHHEHQGEAER) the composition is skewed to basic and acidic residues. The disordered stretch occupies residues 191–241 (EVNKPVEEEPRQDHGHHEHGHHEHQGEAERHRHGHHHPHHHHHHHRGQQQV). Residues 221–237 (HRHGHHHPHHHHHHHRG) show a composition bias toward basic residues. Non-standard amino acids (selenocysteine) are located at Sec267, Sec273, Sec279, Sec290, Sec292, Sec294, Sec310, Sec320, Sec322, Sec336, Sec338, Sec346, Sec353, Sec355, Sec362, and Sec364. The disordered stretch occupies residues 309 to 367 (LUHCDEPLPASUPUQGLKEQDNHIKETUQURPAPPAEUELSQPTUVUPAGDATUGURKK). A compositionally biased stretch (basic and acidic residues) spans 326-336 (KEQDNHIKETU).

The protein belongs to the selenoprotein P family.

The protein localises to the secreted. In terms of biological role, might be responsible for some of the extracellular antioxidant defense properties of selenium or might be involved in the transport of selenium. The polypeptide is Selenoprotein Pa (sepp1a) (Danio rerio (Zebrafish)).